A 713-amino-acid chain; its full sequence is UvrABC system protein B (713 aa).

The region spanning R35 to R421 is the Helicase ATP-binding domain. G48–S55 lines the ATP pocket. The Beta-hairpin signature appears at Y101 to I124. One can recognise a Helicase C-terminal domain in the interval Q438 to V604. The interval Q624–P663 is disordered. Over residues G639–S649 the composition is skewed to low complexity. The segment covering K653–P663 has biased composition (basic and acidic residues). The UVR domain occupies A668 to E703.

Belongs to the UvrB family. Forms a heterotetramer with UvrA during the search for lesions. Interacts with UvrC in an incision complex.

The protein resides in the cytoplasm. The UvrABC repair system catalyzes the recognition and processing of DNA lesions. A damage recognition complex composed of 2 UvrA and 2 UvrB subunits scans DNA for abnormalities. Upon binding of the UvrA(2)B(2) complex to a putative damaged site, the DNA wraps around one UvrB monomer. DNA wrap is dependent on ATP binding by UvrB and probably causes local melting of the DNA helix, facilitating insertion of UvrB beta-hairpin between the DNA strands. Then UvrB probes one DNA strand for the presence of a lesion. If a lesion is found the UvrA subunits dissociate and the UvrB-DNA preincision complex is formed. This complex is subsequently bound by UvrC and the second UvrB is released. If no lesion is found, the DNA wraps around the other UvrB subunit that will check the other stand for damage. The protein is UvrABC system protein B of Streptomyces avermitilis (strain ATCC 31267 / DSM 46492 / JCM 5070 / NBRC 14893 / NCIMB 12804 / NRRL 8165 / MA-4680).